The following is a 157-amino-acid chain: S-ribosylhomocysteine lyase (157 aa).

His-54, His-58, and Cys-124 together coordinate Fe cation.

It belongs to the LuxS family. As to quaternary structure, homodimer. The cofactor is Fe cation.

It carries out the reaction S-(5-deoxy-D-ribos-5-yl)-L-homocysteine = (S)-4,5-dihydroxypentane-2,3-dione + L-homocysteine. Its function is as follows. Involved in the synthesis of autoinducer 2 (AI-2) which is secreted by bacteria and is used to communicate both the cell density and the metabolic potential of the environment. The regulation of gene expression in response to changes in cell density is called quorum sensing. Catalyzes the transformation of S-ribosylhomocysteine (RHC) to homocysteine (HC) and 4,5-dihydroxy-2,3-pentadione (DPD). This is S-ribosylhomocysteine lyase from Lactobacillus helveticus (strain DPC 4571).